The chain runs to 341 residues: Phospholipid phosphatase homolog 1.2 homolog (341 aa).

3 helical membrane passes run 30–50 (LFIF…LLGV), 71–91 (ITAV…VLFV), and 122–142 (LLTY…LNIV). A glycan (N-linked (GlcNAc...) asparagine) is linked at Asn162. A run of 2 helical transmembrane segments spans residues 223–243 (RIVV…ISFS) and 257–277 (VGIF…TDLF). Disordered regions lie at residues 284-308 (SETQ…ERHR) and 322-341 (FEAT…PQSA). Positions 299-308 (RNSEDEERHR) are enriched in basic and acidic residues.

It belongs to the PA-phosphatase related phosphoesterase family.

It is found in the membrane. The chain is Phospholipid phosphatase homolog 1.2 homolog from Caenorhabditis elegans.